The sequence spans 339 residues: tRNA N6-adenosine threonylcarbamoyltransferase (339 aa).

Residues His-111 and His-115 each contribute to the Fe cation site. Substrate is bound by residues 139–143 (LVSGG), Asp-172, Gly-185, Asp-189, and Asn-280. Asp-308 serves as a coordination point for Fe cation.

It belongs to the KAE1 / TsaD family. Fe(2+) is required as a cofactor.

The protein resides in the cytoplasm. The catalysed reaction is L-threonylcarbamoyladenylate + adenosine(37) in tRNA = N(6)-L-threonylcarbamoyladenosine(37) in tRNA + AMP + H(+). Functionally, required for the formation of a threonylcarbamoyl group on adenosine at position 37 (t(6)A37) in tRNAs that read codons beginning with adenine. Is involved in the transfer of the threonylcarbamoyl moiety of threonylcarbamoyl-AMP (TC-AMP) to the N6 group of A37, together with TsaE and TsaB. TsaD likely plays a direct catalytic role in this reaction. The sequence is that of tRNA N6-adenosine threonylcarbamoyltransferase from Phocaeicola vulgatus (strain ATCC 8482 / DSM 1447 / JCM 5826 / CCUG 4940 / NBRC 14291 / NCTC 11154) (Bacteroides vulgatus).